Reading from the N-terminus, the 1021-residue chain is Nonribosomal peptide synthetase asaC (1021 aa).

An adenylation (A) domain region spans residues 17-418 (RHHVRTSPNA…ARADNMVKIR (402 aa)). One can recognise a Carrier domain in the interval 528–603 (KDAGDSVTWL…GLASVIDAGH (76 aa)). Position 563 is an O-(pantetheine 4'-phosphoryl)serine (Ser563). A short-chain dehydrogenase/reductase (R) domain region spans residues 646–888 (LTGATGFLGT…MIPVDFITTA (243 aa)).

The protein belongs to the NRP synthetase family.

It functions in the pathway secondary metabolite biosynthesis. Nonribosomal peptide synthetase; part of the gene cluster that mediates the biosynthesis of aspergillic acid, a hydroxamic acid-containing pyrazinone with aliphatic side chains that originates from leucine (Leu) and isoleucine (Ile). Aspergillic acid has antibiotic properties and was shown to be lethal to mice. The first step in the pathway is the production of deoxyaspergillic acid via a condensation between the Ile amine and the Leu carboxylic acid, followed by a reductive release from the protein forming the dipeptide aldehyde NH(2)-Leu-Ile-CHO, which could undergo an intermolecular cyclization resulting in a dihydropyrazinone. As the NRPS asaC lacks a condensation domain, it is improbable that it is responsible for condensation of Leu and Ile. One possibility is that asaC acts on a previously condensed dipeptide and functions as a Leu-Ile reductase to yield deoxyaspergillic acid. After asaC forms deoxyaspergillic acid, the cytochrome P450 asaD oxidizes the pyrazinone to the hydroxamic acid-containing bioactive metabolite aspergillic acid. The hydroxylase/desaturase asaB can then convert aspergillic acid to hydroxyaspergillic acid. Both aspergillic acid and hydroxyaspergillic acid can form complexes with iron producing ferriaspergillin analogs. The chain is Nonribosomal peptide synthetase asaC from Aspergillus flavus (strain ATCC 200026 / FGSC A1120 / IAM 13836 / NRRL 3357 / JCM 12722 / SRRC 167).